Here is a 507-residue protein sequence, read N- to C-terminus: Anthranilate synthase component 1 (507 aa).

L-tryptophan is bound at residue S65. Position 81 is a phosphoserine (S81). T223 is subject to Phosphothreonine. Residue 280–282 (PYL) coordinates L-tryptophan. 316-317 (GT) is a binding site for chorismate. E343 is a Mg(2+) binding site. Residues Y431, R452, 466 to 468 (GGG), and G468 contribute to the chorismate site. E481 contributes to the Mg(2+) binding site.

This sequence belongs to the anthranilate synthase component I family. As to quaternary structure, tetramer of two components I and two components II. Mg(2+) serves as cofactor.

It catalyses the reaction chorismate + L-glutamine = anthranilate + pyruvate + L-glutamate + H(+). The protein operates within amino-acid biosynthesis; L-tryptophan biosynthesis; L-tryptophan from chorismate: step 1/5. The chain is Anthranilate synthase component 1 (TRP2) from Saccharomyces cerevisiae (strain ATCC 204508 / S288c) (Baker's yeast).